The chain runs to 386 residues: MDKASITEGKPIRCKAAILRKAGEPLVIEEIQVDPPQAYEVRIKILCTSLCHTDVTFWKLDSGPLARFPRILGHEAVGVVESIGEKVDGFKQGDVVLPVFHPQCEECKECISPKSNWCTKYTNDYLSNTRRYGMTSRFKDSRGEDIHHFIFVSSFTEYTVVDIAHLVKISPEIPVDIAALLSCSVATGLGAAWKVADVEEGSTVVIFGLGAVGLAVAEGVRLRGAAKIIGVDLNPAKFEIGKRFGITDFVNPALCGEKTISEVIREMTDVGADYSFECIGLASLMEEAFKSTRPGSGKTIVLGMEQKALPISLGSYDLLRGRTVCGTLFGGLKPKLDIPILVDRYLKKELNLEDLITHELSFEEINKAFHLLAEGNSIRCIIWMDK.

Zn(2+)-binding residues include Cys51, Thr53, His74, Cys104, Cys107, Cys110, Cys118, and Cys183. Thr53 and His74 together coordinate an alcohol. Thr53 provides a ligand contact to NAD(+). NAD(+)-binding positions include 208 to 213 (GLGAVG), Asp232, Lys237, 302 to 304 (LGM), Phe329, and Arg379.

Belongs to the zinc-containing alcohol dehydrogenase family. Class-III subfamily. As to quaternary structure, homodimer. Zn(2+) is required as a cofactor.

The protein localises to the cytoplasm. The enzyme catalyses a primary alcohol + NAD(+) = an aldehyde + NADH + H(+). It catalyses the reaction a secondary alcohol + NAD(+) = a ketone + NADH + H(+). The sequence is that of Alcohol dehydrogenase-like 2 from Arabidopsis thaliana (Mouse-ear cress).